The sequence spans 62 residues: DNA-directed RNA polymerase subunit Rpo10 (62 aa).

Residues cysteine 6, cysteine 9, cysteine 43, and cysteine 44 each contribute to the Zn(2+) site.

This sequence belongs to the archaeal Rpo10/eukaryotic RPB10 RNA polymerase subunit family. In terms of assembly, part of the RNA polymerase complex. It depends on Zn(2+) as a cofactor.

Its subcellular location is the cytoplasm. It carries out the reaction RNA(n) + a ribonucleoside 5'-triphosphate = RNA(n+1) + diphosphate. In terms of biological role, DNA-dependent RNA polymerase (RNAP) catalyzes the transcription of DNA into RNA using the four ribonucleoside triphosphates as substrates. This is DNA-directed RNA polymerase subunit Rpo10 from Methanosarcina acetivorans (strain ATCC 35395 / DSM 2834 / JCM 12185 / C2A).